The primary structure comprises 456 residues: UDP-N-acetylglucosamine 1-carboxyvinyltransferase (456 aa).

34–35 (KN) lines the phosphoenolpyruvate pocket. Arg-104 serves as a coordination point for UDP-N-acetyl-alpha-D-glucosamine. The active-site Proton donor is Cys-128. At Cys-128 the chain carries 2-(S-cysteinyl)pyruvic acid O-phosphothioketal. Residues Asp-319 and Ile-341 each contribute to the UDP-N-acetyl-alpha-D-glucosamine site.

This sequence belongs to the EPSP synthase family. MurA subfamily.

The protein resides in the cytoplasm. The enzyme catalyses phosphoenolpyruvate + UDP-N-acetyl-alpha-D-glucosamine = UDP-N-acetyl-3-O-(1-carboxyvinyl)-alpha-D-glucosamine + phosphate. The protein operates within cell wall biogenesis; peptidoglycan biosynthesis. Functionally, cell wall formation. Adds enolpyruvyl to UDP-N-acetylglucosamine. In Prochlorococcus marinus (strain AS9601), this protein is UDP-N-acetylglucosamine 1-carboxyvinyltransferase.